Consider the following 78-residue polypeptide: Large ribosomal subunit protein bL28 (78 aa).

It belongs to the bacterial ribosomal protein bL28 family.

This Marinobacter nauticus (strain ATCC 700491 / DSM 11845 / VT8) (Marinobacter aquaeolei) protein is Large ribosomal subunit protein bL28.